The primary structure comprises 76 residues: EMBRYO SURROUNDING FACTOR 1-like protein 8 (76 aa).

A signal peptide spans 1–22; the sequence is MSSSQFFILCIILISSFPLHEC. 4 disulfides stabilise this stretch: Cys38–Cys54, Cys43–Cys74, Cys52–Cys70, and Cys55–Cys63.

This sequence belongs to the MEG family. Expressed in flowers.

The sequence is that of EMBRYO SURROUNDING FACTOR 1-like protein 8 (ESFL8) from Arabidopsis thaliana (Mouse-ear cress).